The sequence spans 168 residues: Disulfide bond formation protein B (168 aa).

The Cytoplasmic segment spans residues 1 to 13 (MFLTYFDAMPRRV). A helical membrane pass occupies residues 14-30 (LALVSLACVALLAFGLY). Residues 31–48 (LQHVVGLEPCPMCIVQRY) lie on the Periplasmic side of the membrane. The cysteines at positions 40 and 43 are disulfide-linked. Residues 49 to 64 (ALVLVAVVAGITAVAK) traverse the membrane as a helical segment. Over 65 to 70 (SRGLLI) the chain is Cytoplasmic. A helical membrane pass occupies residues 71 to 88 (TGSGLLVLLSGFGAFVAA). Topologically, residues 89–144 (RQSFLQWYPPEVASCGRDFYGMIETFPLKRAIPMIFKGSGDCTKIDWTFLGLSIAN) are periplasmic. A disulfide bridge links Cys103 with Cys130. A helical membrane pass occupies residues 145–163 (WSFLCFVAIALVGLVLITR). The Cytoplasmic portion of the chain corresponds to 164 to 168 (LARQR).

The protein belongs to the DsbB family.

The protein resides in the cell inner membrane. Its function is as follows. Required for disulfide bond formation in some periplasmic proteins. Acts by oxidizing the DsbA protein. The sequence is that of Disulfide bond formation protein B from Polaromonas sp. (strain JS666 / ATCC BAA-500).